A 382-amino-acid chain; its full sequence is Polyadenylate-binding protein 5 (382 aa).

4 RRM domains span residues 18 to 96, 106 to 182, 199 to 276, and 302 to 378; these read AALY…WSQP, GNIF…RFKF, TNVF…RAQK, and VPIY…LGQA.

The protein localises to the cytoplasm. Its function is as follows. Binds the poly(A) tail of mRNA. May be involved in cytoplasmic regulatory processes of mRNA metabolism. Can probably bind to cytoplasmic RNA sequences other than poly(A) in vivo. The chain is Polyadenylate-binding protein 5 (PABPC5) from Gorilla gorilla gorilla (Western lowland gorilla).